Reading from the N-terminus, the 71-residue chain is uncharacterized protein (71 aa).

This sequence belongs to the varicellovirus ORF57 protein family.

This is an uncharacterized protein from Homo sapiens (Human).